A 345-amino-acid polypeptide reads, in one-letter code: Green-sensitive opsin (345 aa).

Over 1-37 (MENGTEGKNFYIPMNNRTGLVRSPYEYPQYYLADPWQ) the chain is Extracellular. N-linked (GlcNAc...) asparagine glycosylation is found at asparagine 3 and asparagine 16. Residues 38–62 (FKLLGIYMFFLILTGFPINALTLVV) traverse the membrane as a helical segment. Over 63–74 (TAQNKKLRQPLN) the chain is Cytoplasmic. The helical transmembrane segment at 75–100 (FILVNLAVAGLIMVCFGFTVCIYSCM) threads the bilayer. Topologically, residues 101 to 114 (VGYFSLGPLGCTIE) are extracellular. Residues cysteine 111 and cysteine 188 are joined by a disulfide bond. A helical transmembrane segment spans residues 115 to 134 (GFMATLGGQVSLWSLVVLAI). The Cytoplasmic segment spans residues 135 to 153 (ERYIVVCKPMGSFKFTATH). The helical transmembrane segment at 154 to 177 (SAAGCAFTWIMASSCAVPPLVGWS) threads the bilayer. At 178–203 (RYIPEGIQVSCGPDYYTLAPGFNNES) the chain is on the extracellular side. A glycan (N-linked (GlcNAc...) asparagine) is linked at asparagine 201. A helical membrane pass occupies residues 204-231 (FVMYMFSCHFCVPVFTIFFTYGSLVMTV). Over 232-253 (KAAAAQQQDSASTQKAEKEVTR) the chain is Cytoplasmic. The helical transmembrane segment at 254–277 (MCFLMVLGFLLAWVPYASYAAWIF) threads the bilayer. Residues 278–285 (FNRGAAFS) lie on the Extracellular side of the membrane. The chain crosses the membrane as a helical span at residues 286–310 (AMSMAIPSFFSKSSALFNPIIYILL). Lysine 297 carries the N6-(retinylidene)lysine modification. The Cytoplasmic segment spans residues 311–345 (NKQFRNCMLATIGMGGMVEDETSVSTSKTEVSTAA).

Belongs to the G-protein coupled receptor 1 family. Opsin subfamily. Phosphorylated on some or all of the serine and threonine residues present in the C-terminal region. The color pigments are found in the cone photoreceptor cells.

The protein resides in the membrane. Functionally, visual pigments are the light-absorbing molecules that mediate vision. They consist of an apoprotein, opsin, covalently linked to cis-retinal. This chain is Green-sensitive opsin, found in Oryzias latipes (Japanese rice fish).